Reading from the N-terminus, the 875-residue chain is Ectonucleotide pyrophosphatase/phosphodiesterase family member 3 (875 aa).

Residues 1 to 11 (MDSRLALATEE) are Cytoplasmic-facing. The chain crosses the membrane as a helical; Signal-anchor for type II membrane protein span at residues 12-30 (PIKKDSLKRYKILCAVLLA). Over 31–875 (LLVIVSLGLG…TYLPTFETII (845 aa)) the chain is Extracellular. 2 consecutive SMB domains span residues 51-94 (HIGS…VKST) and 95-139 (QIWT…GEVP). Disulfide bonds link C55–C72, C59–C90, C70–C83, C76–C82, C99–C116, C104–C134, C114–C127, C120–C126, C145–C191, and C153–C365. A Cell attachment site motif is present at residues 79 to 81 (RGD). Positions 161–545 (PVILFSMDGF…HGSLNHLLKA (385 aa)) are phosphodiesterase. A Zn(2+)-binding site is contributed by D168. K205 contributes to the ATP binding site. T206 is a binding site for Zn(2+). The Nucleophile role is filled by T206. N227 lines the ATP pocket. N-linked (GlcNAc...) asparagine glycosylation is present at N237. D276 contacts ATP. N280 and N289 each carry an N-linked (GlcNAc...) asparagine glycan. Y290 serves as a coordination point for ATP. Zn(2+) is bound by residues D326, H330, D373, and H374. Cystine bridges form between C381–C478, C429–C818, C562–C623, C575–C679, C577–C664, and C787–C797. H483 serves as a coordination point for Zn(2+). 4 N-linked (GlcNAc...) asparagine glycosylation sites follow: N533, N574, N594, and N702. The interval 582-875 (TSGQEEQVNQ…TYLPTFETII (294 aa)) is nuclease. Positions 752, 754, 756, 758, and 760 each coordinate Ca(2+). Residue N789 is glycosylated (N-linked (GlcNAc...) asparagine).

It belongs to the nucleotide pyrophosphatase/phosphodiesterase family. In terms of assembly, monomer and homodimer. Requires Zn(2+) as cofactor. The N-terminal is blocked. Post-translationally, N-glycosylated. N-glycosylation is necessary for normal transport to the cell membrane, but is not the apical targeting signal. In terms of tissue distribution, detected in intestinal epithelium and liver (at protein level).

Its subcellular location is the cell membrane. It localises to the apical cell membrane. The protein resides in the secreted. It catalyses the reaction Hydrolytically removes 5'-nucleotides successively from the 3'-hydroxy termini of 3'-hydroxy-terminated oligonucleotides.. It carries out the reaction a ribonucleoside 5'-triphosphate + H2O = a ribonucleoside 5'-phosphate + diphosphate + H(+). The catalysed reaction is ATP + H2O = AMP + diphosphate + H(+). The enzyme catalyses CTP + H2O = CMP + diphosphate + H(+). It catalyses the reaction GTP + H2O = GMP + diphosphate + H(+). It carries out the reaction UTP + H2O = UMP + diphosphate + H(+). The catalysed reaction is UDP-N-acetyl-alpha-D-glucosamine + H2O = N-acetyl-alpha-D-glucosamine 1-phosphate + UMP + 2 H(+). The enzyme catalyses P(1),P(3)-bis(5'-adenosyl) triphosphate + H2O = AMP + ADP + 2 H(+). It catalyses the reaction P(1),P(4)-bis(5'-adenosyl) tetraphosphate + H2O = AMP + ATP + 2 H(+). It carries out the reaction P(1),P(5)-bis(5'-adenosyl) pentaphosphate + H2O = adenosine 5'-tetraphosphate + AMP + 2 H(+). The catalysed reaction is P(1),P(4)-bis(5'-guanosyl) tetraphosphate + H2O = GMP + GTP + 2 H(+). In terms of biological role, hydrolase that metabolizes extracellular nucleotides, including ATP, GTP, UTP and CTP. Limits mast cells and basophils response during inflammation and during the chronic phases of allergic responses by eliminating extracellular ATP, a signaling molecule activating these cells in an autocrine manner. Metabolizes extracellular ATP in the lumen of the small intestine, and thereby prevents ATP-induced apoptosis of intestinal plasmacytoid dendritic cells. Has a broad specificity and can also hydrolyze UDP-GlcNAc into UMP and GlcNAc-1-phosphate and potentially several other intracellular nucleotide sugars, including UDP-GalNAc, CMP-NeuAc, GDP-Fuc, and UDP-GlcA. Thereby, could modulate glycan biosynthesis and protein glycosylation. Can hydrolyze extracellular dinucleoside polyphosphates, including the vasoactive adenosine polyphosphates as well. In addition, displays an alkaline phosphodiesterase activity in vitro. The sequence is that of Ectonucleotide pyrophosphatase/phosphodiesterase family member 3 from Rattus norvegicus (Rat).